Here is a 533-residue protein sequence, read N- to C-terminus: (E)-beta-farnesene synthase (533 aa).

Residues Asp286, Asp290, Asn430, Ser434, and Glu438 each coordinate Mg(2+). The DDXXD motif signature appears at 286 to 290 (DDMMD).

This sequence belongs to the terpene synthase family. Mg(2+) is required as a cofactor. Requires Co(2+) as cofactor. It depends on Mn(2+) as a cofactor.

The protein resides in the cytoplasm. The enzyme catalyses (2E,6E)-farnesyl diphosphate = (E)-beta-farnesene + diphosphate. It participates in secondary metabolite biosynthesis; terpenoid biosynthesis. In terms of biological role, sesquiterpene cyclase catalyzing the production of beta-farnesene and alpha-bergamotene in equal amounts from farnesyl diphosphate. Involved in indirect defense by producing volatile signals attracting natural enemies of herbivores. This chain is (E)-beta-farnesene synthase, found in Zea mays subsp. huehuetenangensis (San Antonio Huista teosinte).